A 419-amino-acid polypeptide reads, in one-letter code: Endochitinase 2 (419 aa).

The signal sequence occupies residues 1 to 18; the sequence is MHHLRALVGVGLAGLAAG. Residues 35-343 form the GH18 domain; it reads AQNVVYWGQN…QQAKSILVNG (309 aa). A glycan (N-linked (GlcNAc...) asparagine) is linked at N153. E173 acts as the Proton donor in catalysis. Residues N237 and N256 are each glycosylated (N-linked (GlcNAc...) asparagine). The segment at 343–390 is disordered; the sequence is GAPCPSSGPPSSTPATAPAPTATTMPSSTSVSSPTASPTGGTVPQWGQ. Residues 355 to 384 are compositionally biased toward low complexity; that stretch reads TPATAPAPTATTMPSSTSVSSPTASPTGGT. The 37-residue stretch at 383–419 folds into the CBM1 domain; it reads GTVPQWGQCGGEGYSGPTQCVPPYQCVKQGDWWSSCR.

The protein belongs to the glycosyl hydrolase 18 family. Chitinase class III subfamily.

It is found in the secreted. It carries out the reaction Random endo-hydrolysis of N-acetyl-beta-D-glucosaminide (1-&gt;4)-beta-linkages in chitin and chitodextrins.. In terms of biological role, secreted chitinase involved in the degradation of chitin, a component of the cell walls of fungi and exoskeletal elements of some animals (including worms and arthropods). Participates in the infection process and directly acts in the penetration process of the host cuticle. This Metarhizium anisopliae (Entomophthora anisopliae) protein is Endochitinase 2 (chi2).